The following is a 190-amino-acid chain: Probable RNA-binding protein 18 (190 aa).

Residues 25-106 form the RRM domain; it reads HRLWIGNLDP…KKLVVRWAHA (82 aa). The tract at residues 166–190 is disordered; that stretch reads VYSYFKPPDKKRTTPYSRTAWKSRR.

The chain is Probable RNA-binding protein 18 (RBM18) from Bos taurus (Bovine).